The sequence spans 266 residues: Thiazole synthase (266 aa).

Catalysis depends on K107, which acts as the Schiff-base intermediate with DXP. 1-deoxy-D-xylulose 5-phosphate-binding positions include G168, 194-195, and 216-217; these read AG and NT.

It belongs to the ThiG family. As to quaternary structure, homotetramer. Forms heterodimers with either ThiH or ThiS.

The protein localises to the cytoplasm. The catalysed reaction is [ThiS sulfur-carrier protein]-C-terminal-Gly-aminoethanethioate + 2-iminoacetate + 1-deoxy-D-xylulose 5-phosphate = [ThiS sulfur-carrier protein]-C-terminal Gly-Gly + 2-[(2R,5Z)-2-carboxy-4-methylthiazol-5(2H)-ylidene]ethyl phosphate + 2 H2O + H(+). It functions in the pathway cofactor biosynthesis; thiamine diphosphate biosynthesis. In terms of biological role, catalyzes the rearrangement of 1-deoxy-D-xylulose 5-phosphate (DXP) to produce the thiazole phosphate moiety of thiamine. Sulfur is provided by the thiocarboxylate moiety of the carrier protein ThiS. In vitro, sulfur can be provided by H(2)S. In Azorhizobium caulinodans (strain ATCC 43989 / DSM 5975 / JCM 20966 / LMG 6465 / NBRC 14845 / NCIMB 13405 / ORS 571), this protein is Thiazole synthase.